The sequence spans 353 residues: 2-oxoglutarate-dependent dioxygenase phqC (353 aa).

In terms of domain architecture, Fe2OG dioxygenase spans 199–315 (CASELRLNNY…RRSCAFFLKA (117 aa)). Positions 227, 229, and 287 each coordinate Fe cation. R302 lines the 2-oxoglutarate pocket.

The protein belongs to the iron/ascorbate-dependent oxidoreductase family. Fe(2+) serves as cofactor.

It functions in the pathway alkaloid biosynthesis. 2-oxoglutarate-dependent dioxygenase; part of the gene cluster that mediates the biosynthesis of paraherquamide, a fungal indole alkaloid that belongs to a family of natural products containing a characteristic bicyclo[2.2.2]diazaoctane core. The first steps in the biosynthesis of paraherquamide is the production of the beta-methyl-proline precursor from L-isoleucine. They require oxidation of a terminally hydroxylated L-isoleucine to the corresponding aldehyde by enzymes which have still to be identified. Spontaneous cyclization and dehydration would yield the 4-methyl pyrolline-5-carboxylic acid, which is then reduced by the pyrroline-5-carboxylate reductase phqD leading to the beta-methyl-proline precursor. The next step of paraherquamide biosynthesis involves coupling of beta-methyl-proline and L-tryptophan by the bimodular NRPS phqB, to produce a monooxopiperazine intermediate. The reductase (R) domain of phqB utilizes NADPH for hydride transfer to reduce the thioester bond of the T domain-tethered linear dipeptide to a hemithioaminal intermediate, which spontaneously cleaves the C-S bond to release the aldehyde product. This compound undergoes spontaneous cyclization and dehydration to give a dienamine which is reverse prenylated at C-2 by the reverse prenyltransferase phqJ. The other prenyltransferase present in the cluster, phqI may be a redundant gene in the pathway. During biosynthetic assembly, the key step to produce the polycyclic core is catalyzed by the bifunctional reductase and intramolecular [4+2] Diels-Alderase, phqE, resulting in formation of the [2.2.2] diazaoctane intermediate preparaherquamide. Following formation of preparaherquamide, an indole 2,3-epoxidation-initiated pinacol-like rearrangement is catalyzed by the phqK FAD-dependent monooxygenase. The prenyltransferase phqA, the cytochrome P450 monooxygenase phqL, and the FAD-linked oxidoreductase phqH (or the cytochrome P450 monooxygenase phqM), are proposed to be involved in the formation of the pyran ring. The FAD-dependent monooxygenase phqK is likely responsible for generation of the spiro-oxindole, and the N-methylation is likely mediated by the phqN methyltransferase leading to the isolable natural product paraherquamide F. However, the order of these biosynthetic steps has still to be determined. In late-stage paraherquamide biosynthesis, the third P450 monooxygenase, phqO, is probably responsible for the C-14 hydroxylation, transforming paraherquamide F to paraherquamide G, and paraherquamide E to the final product paraherquamide A. The expansion from the 6-membered ring pyran (in paraherquamides F and G) to the 7-membered dioxepin ring (in paraherquamides A and E) represents a poorly understood but intriguing process that probably involves the 2-oxoglutarate-dependent dioxygenase phqC. Finally, the remaining members of the paraherquamide cluster, including phqI as well as phqM (or phqH), do not have a clearly prescribed role and appear to be redundant. The protein is 2-oxoglutarate-dependent dioxygenase phqC of Penicillium fellutanum.